The chain runs to 225 residues: UPF0700 transmembrane protein YoaK (225 aa).

The next 6 helical transmembrane spans lie at 10–30, 56–76, 99–119, 137–157, 174–194, and 197–217; these read LLSL…LSLG, VFNS…ATLM, ILFV…HILI, GIAG…LEDI, TVLR…VALA, and DFYH…MMTA.

This sequence belongs to the UPF0700 family.

It localises to the cell membrane. In Bacillus subtilis (strain 168), this protein is UPF0700 transmembrane protein YoaK (yoaK).